The primary structure comprises 459 residues: Bifunctional protein GlmU (459 aa).

Positions 1–230 (MSNRFAVILA…FDETLGVNDR (230 aa)) are pyrophosphorylase. Residues 9–12 (LAAG), Lys23, Gln73, and 78–79 (GT) each bind UDP-N-acetyl-alpha-D-glucosamine. Mg(2+) is bound at residue Asp103. Positions 140, 155, 170, and 228 each coordinate UDP-N-acetyl-alpha-D-glucosamine. Asn228 contributes to the Mg(2+) binding site. Residues 231–251 (VALSQAEIIMKNRINRKNMVN) are linker. Residues 252 to 459 (GVTIIDPSNT…VDQLLNKKKS (208 aa)) form an N-acetyltransferase region. UDP-N-acetyl-alpha-D-glucosamine-binding residues include Arg333 and Lys351. Residue His363 is the Proton acceptor of the active site. UDP-N-acetyl-alpha-D-glucosamine is bound by residues Tyr366 and Asn377. Residues 386-387 (NY), Ala423, and Arg440 each bind acetyl-CoA.

This sequence in the N-terminal section; belongs to the N-acetylglucosamine-1-phosphate uridyltransferase family. The protein in the C-terminal section; belongs to the transferase hexapeptide repeat family. Homotrimer. The cofactor is Mg(2+).

It localises to the cytoplasm. The enzyme catalyses alpha-D-glucosamine 1-phosphate + acetyl-CoA = N-acetyl-alpha-D-glucosamine 1-phosphate + CoA + H(+). It catalyses the reaction N-acetyl-alpha-D-glucosamine 1-phosphate + UTP + H(+) = UDP-N-acetyl-alpha-D-glucosamine + diphosphate. It participates in nucleotide-sugar biosynthesis; UDP-N-acetyl-alpha-D-glucosamine biosynthesis; N-acetyl-alpha-D-glucosamine 1-phosphate from alpha-D-glucosamine 6-phosphate (route II): step 2/2. It functions in the pathway nucleotide-sugar biosynthesis; UDP-N-acetyl-alpha-D-glucosamine biosynthesis; UDP-N-acetyl-alpha-D-glucosamine from N-acetyl-alpha-D-glucosamine 1-phosphate: step 1/1. Its pathway is bacterial outer membrane biogenesis; LPS lipid A biosynthesis. Functionally, catalyzes the last two sequential reactions in the de novo biosynthetic pathway for UDP-N-acetylglucosamine (UDP-GlcNAc). The C-terminal domain catalyzes the transfer of acetyl group from acetyl coenzyme A to glucosamine-1-phosphate (GlcN-1-P) to produce N-acetylglucosamine-1-phosphate (GlcNAc-1-P), which is converted into UDP-GlcNAc by the transfer of uridine 5-monophosphate (from uridine 5-triphosphate), a reaction catalyzed by the N-terminal domain. The chain is Bifunctional protein GlmU from Bacillus mycoides (strain KBAB4) (Bacillus weihenstephanensis).